Reading from the N-terminus, the 146-residue chain is Small ribosomal subunit protein uS13 (146 aa).

The tract at residues 119–146 (ARGKKVRGQRTRSTGRKGRTVGVVRRKR) is disordered.

This sequence belongs to the universal ribosomal protein uS13 family. Part of the 30S ribosomal subunit. Forms a loose heterodimer with protein S19. Forms two bridges to the 50S subunit in the 70S ribosome.

Functionally, located at the top of the head of the 30S subunit, it contacts several helices of the 16S rRNA. In the 70S ribosome it contacts the 23S rRNA (bridge B1a) and protein L5 of the 50S subunit (bridge B1b), connecting the 2 subunits; these bridges are implicated in subunit movement. This chain is Small ribosomal subunit protein uS13, found in Archaeoglobus fulgidus (strain ATCC 49558 / DSM 4304 / JCM 9628 / NBRC 100126 / VC-16).